A 531-amino-acid polypeptide reads, in one-letter code: Lysine--tRNA ligase, mitochondrial (531 aa).

The transit peptide at 1–18 (MISRGLLSKGILSIIKRK) directs the protein to the mitochondrion.

This sequence belongs to the class-II aminoacyl-tRNA synthetase family.

It is found in the mitochondrion. It carries out the reaction tRNA(Lys) + L-lysine + ATP = L-lysyl-tRNA(Lys) + AMP + diphosphate. This chain is Lysine--tRNA ligase, mitochondrial (msk1), found in Schizosaccharomyces pombe (strain 972 / ATCC 24843) (Fission yeast).